We begin with the raw amino-acid sequence, 295 residues long: Pyridoxal 5'-phosphate synthase subunit PdxS (295 aa).

D25 contributes to the D-ribose 5-phosphate binding site. K82 acts as the Schiff-base intermediate with D-ribose 5-phosphate in catalysis. G154 is a D-ribose 5-phosphate binding site. Position 166 (R166) interacts with D-glyceraldehyde 3-phosphate. D-ribose 5-phosphate-binding positions include G215 and 236–237 (GS).

Belongs to the PdxS/SNZ family. As to quaternary structure, in the presence of PdxT, forms a dodecamer of heterodimers.

The catalysed reaction is aldehydo-D-ribose 5-phosphate + D-glyceraldehyde 3-phosphate + L-glutamine = pyridoxal 5'-phosphate + L-glutamate + phosphate + 3 H2O + H(+). The protein operates within cofactor biosynthesis; pyridoxal 5'-phosphate biosynthesis. In terms of biological role, catalyzes the formation of pyridoxal 5'-phosphate from ribose 5-phosphate (RBP), glyceraldehyde 3-phosphate (G3P) and ammonia. The ammonia is provided by the PdxT subunit. Can also use ribulose 5-phosphate and dihydroxyacetone phosphate as substrates, resulting from enzyme-catalyzed isomerization of RBP and G3P, respectively. In Bacillus cytotoxicus (strain DSM 22905 / CIP 110041 / 391-98 / NVH 391-98), this protein is Pyridoxal 5'-phosphate synthase subunit PdxS.